We begin with the raw amino-acid sequence, 126 residues long: Large ribosomal subunit protein eL14 (126 aa).

The protein belongs to the eukaryotic ribosomal protein eL14 family.

This is Large ribosomal subunit protein eL14 (RPL14) from Tetrahymena thermophila (strain SB210).